A 560-amino-acid chain; its full sequence is Developmental and secondary metabolism regulator veA (560 aa).

Positions 35–241 (GRRLWYRMRV…AEQGCRVRIR (207 aa)) constitute a Velvet domain. A Nuclear localization signal motif is present at residues 49-54 (ERARAC). Disordered stretches follow at residues 49–70 (ERARACGSGPKSSADRRPVDPP), 171–197 (KEDKDKDKERDVESQPPLTGLSPATGG), and 250–560 (DGKG…RLRY). Basic and acidic residues predominate over residues 171 to 183 (KEDKDKDKERDVE). The segment covering 336–355 (AAPPQPFAQPPSVPASPVYP) has biased composition (pro residues). Over residues 395-405 (PRRESIHHDYR) the composition is skewed to basic and acidic residues. A compositionally biased stretch (pro residues) spans 411 to 439 (QLPPLPPPPYYPPTPQQSHMPPPQPPQVL). The segment covering 444–453 (IDSNSKSNNR) has biased composition (polar residues). The tract at residues 455–496 (PMPSPTALANSAPRPLASLAPLAPLMQSTSSSAGKGPVHPAT) is PEST. Over residues 461-479 (ALANSAPRPLASLAPLAPL) the composition is skewed to low complexity. Composition is skewed to basic and acidic residues over residues 508-535 (RAHDESFWSEPEHGRYQNGTRDKGRSED) and 546-560 (RRADGTEADGIRLRY).

Belongs to the velvet family. VeA subfamily. As to quaternary structure, component of the heterotrimeric velvet complex composed of laeA, veA and velB; VeA acting as a bridging protein between laeA and velB.

The protein localises to the nucleus. The protein resides in the cytoplasm. Its function is as follows. Component of the velvet transcription factor complex that controls sexual/asexual developmental ratio in response to light, promoting sexual development in the darkness while stimulating asexual sporulation under illumination. The velvet complex acts as a global regulator for secondary metabolite gene expression. Positively regulates chaetoglobosin A biosynthesis by controlling the expression of core genes of the chaetoglobosin A biosynthetic gene cluster and other relevant regulators in a light-dependent manner. VeA directly regulates transcription factors brlA, laeA, and the chaetoglobosin A cluster-specific transcription regulator cheR. Also directly regulates the expression of one of the chaetoglobosin A cluster cytochrome P450 monooxygenases (cheE or cheG), but only indirectly regulates the expression of the PKS-NRPS hybrid cheA. Moreover, VeA has a significant effect on the asexual spores production, irrespective of light or dark condition. The polypeptide is Developmental and secondary metabolism regulator veA (Chaetomium globosum (strain ATCC 6205 / CBS 148.51 / DSM 1962 / NBRC 6347 / NRRL 1970) (Soil fungus)).